The primary structure comprises 267 residues: Acyl-[acyl-carrier-protein]--UDP-N-acetylglucosamine O-acyltransferase (267 aa).

This sequence belongs to the transferase hexapeptide repeat family. LpxA subfamily. Homotrimer.

The protein localises to the cytoplasm. The enzyme catalyses a (3R)-hydroxyacyl-[ACP] + UDP-N-acetyl-alpha-D-glucosamine = a UDP-3-O-[(3R)-3-hydroxyacyl]-N-acetyl-alpha-D-glucosamine + holo-[ACP]. The protein operates within glycolipid biosynthesis; lipid IV(A) biosynthesis; lipid IV(A) from (3R)-3-hydroxytetradecanoyl-[acyl-carrier-protein] and UDP-N-acetyl-alpha-D-glucosamine: step 1/6. Its function is as follows. Involved in the biosynthesis of lipid A, a phosphorylated glycolipid that anchors the lipopolysaccharide to the outer membrane of the cell. The chain is Acyl-[acyl-carrier-protein]--UDP-N-acetylglucosamine O-acyltransferase from Cupriavidus taiwanensis (strain DSM 17343 / BCRC 17206 / CCUG 44338 / CIP 107171 / LMG 19424 / R1) (Ralstonia taiwanensis (strain LMG 19424)).